Here is a 470-residue protein sequence, read N- to C-terminus: Desmin (470 aa).

Residues 2-108 (SQAYSSSQRV…QEFLTTRTNE (107 aa)) form a head region. Residue Ser7 is modified to Phosphoserine; by CDK1. Ser12 bears the Phosphoserine; by AURKB mark. Arg16 bears the Omega-N-methylarginine mark. Thr17 bears the Phosphothreonine; by AURKB and ROCK1 mark. Ser28 carries the post-translational modification Phosphoserine; by CDK1. A Phosphoserine modification is found at Ser31. At Ser32 the chain carries Phosphoserine; by CDK1. Position 37 is an asymmetric dimethylarginine; alternate (Arg37). An Omega-N-methylarginine; alternate modification is found at Arg37. Phosphoserine is present on Ser45. At Arg58 the chain carries ADP-ribosylarginine. Residue Ser60 is modified to Phosphoserine; by AURKB. Arg70 is modified (omega-N-methylarginine). At Thr77 the chain carries Phosphothreonine; by ROCK1. Phosphoserine is present on Ser81. The region spanning 108-416 (EKVELQELND…KLLEGEESRI (309 aa)) is the IF rod domain. A coil 1A region spans residues 109–141 (KVELQELNDRFANYIEKVRFLEQQNAALAAEVN). A linker 1 region spans residues 142–151 (RLKGREPTRV). Residues 152 to 252 (AEIYEEELRE…HEEEIRELQA (101 aa)) are coil 1B. Residues 253–268 (QLQEQQVQVEMDMSKP) form a linker 12 region. Residues 268–415 (PDLTAALRDI…RKLLEGEESR (148 aa)) form an interaction with NEB region. The interval 269-287 (DLTAALRDIRAQYETIAAK) is coil 2A. The interval 288 to 295 (NISEAEEW) is linker 2. Phosphoserine occurs at positions 290, 358, 361, and 424. The tract at residues 296-412 (YKSKVSDLTQ…ATYRKLLEGE (117 aa)) is coil 2B. The tract at residues 413 to 470 (ESRINLPIQTFSALNFRETSPEQRGSEVHTKKTVMIKTIETRDGEVVSEATQQQHEVL) is tail. An interaction with CRYAB region spans residues 438–453 (SEVHTKKTVMIKTIET).

Belongs to the intermediate filament family. In terms of assembly, homomer. Interacts with DST. Interacts with MTM1. Interacts with EPPK1; interaction is dependent of higher-order structure of intermediate filament. Interacts with CRYAB. Interacts with NEB (via nebulin repeats 160-164). Interacts (via rod region) with NEBL (via nebulin repeats 1-5). Interacts with ASB2; the interaction targets DES for proteasomal degradation. Interacts with PKP1. Interacts with FLII. In terms of processing, ADP-ribosylation prevents ability to form intermediate filaments. Post-translationally, phosphorylation at Ser-7, Ser-28 and Ser-32 by CDK1 and phosphorylation at Ser-60 by AURKB contribute to efficient separation of desmin intermediate filaments during mitosis. Ubiquitination by a SCF-like complex containing ASB2 leads to proteasomal degradation.

Its subcellular location is the cytoplasm. It localises to the myofibril. It is found in the sarcomere. The protein localises to the z line. The protein resides in the cell membrane. Its subcellular location is the sarcolemma. It localises to the nucleus. It is found in the cell tip. The protein localises to the nucleus envelope. Its function is as follows. Muscle-specific type III intermediate filament essential for proper muscular structure and function. Plays a crucial role in maintaining the structure of sarcomeres, inter-connecting the Z-disks and forming the myofibrils, linking them not only to the sarcolemmal cytoskeleton, but also to the nucleus and mitochondria, thus providing strength for the muscle fiber during activity. In adult striated muscle they form a fibrous network connecting myofibrils to each other and to the plasma membrane from the periphery of the Z-line structures. May act as a sarcomeric microtubule-anchoring protein: specifically associates with detyrosinated tubulin-alpha chains, leading to buckled microtubules and mechanical resistance to contraction. Required for nuclear membrane integrity, via anchoring at the cell tip and nuclear envelope, resulting in maintenance of microtubule-derived intracellular mechanical forces. Contributes to the transcriptional regulation of the NKX2-5 gene in cardiac progenitor cells during a short period of cardiomyogenesis and in cardiac side population stem cells in the adult. Plays a role in maintaining an optimal conformation of nebulette (NEB) on heart muscle sarcomeres to bind and recruit cardiac alpha-actin. This chain is Desmin (DES), found in Bos taurus (Bovine).